The sequence spans 312 residues: Malate dehydrogenase (312 aa).

NAD(+) is bound by residues Gly-7–Gly-13 and Asp-34. Residues Arg-81 and Arg-87 each contribute to the substrate site. Residues Asn-94 and Ile-117–Asn-119 contribute to the NAD(+) site. 2 residues coordinate substrate: Asn-119 and Arg-153. His-177 (proton acceptor) is an active-site residue. Met-227 lines the NAD(+) pocket.

Belongs to the LDH/MDH superfamily. MDH type 1 family. In terms of assembly, homodimer.

The enzyme catalyses (S)-malate + NAD(+) = oxaloacetate + NADH + H(+). Its function is as follows. Catalyzes the reversible oxidation of malate to oxaloacetate. This chain is Malate dehydrogenase, found in Escherichia coli (strain 55989 / EAEC).